A 282-amino-acid chain; its full sequence is Undecaprenyl-diphosphatase (282 aa).

Helical transmembrane passes span 1 to 21, 39 to 59, 85 to 105, 115 to 135, 153 to 173, 193 to 213, 229 to 249, and 259 to 279; these read MTLI…FLPI, PGAA…MLYF, AKMG…GLLF, SLYW…LAEW, IGWK…IPGS, AARF…AFEL, NLAV…AFLL, and IFIA…GGGT.

The protein belongs to the UppP family.

The protein localises to the cell inner membrane. The enzyme catalyses di-trans,octa-cis-undecaprenyl diphosphate + H2O = di-trans,octa-cis-undecaprenyl phosphate + phosphate + H(+). In terms of biological role, catalyzes the dephosphorylation of undecaprenyl diphosphate (UPP). Confers resistance to bacitracin. The protein is Undecaprenyl-diphosphatase of Chlorobium luteolum (strain DSM 273 / BCRC 81028 / 2530) (Pelodictyon luteolum).